Reading from the N-terminus, the 215-residue chain is Protein Syd (215 aa).

The protein belongs to the Syd family.

It is found in the cell inner membrane. In terms of biological role, interacts with the SecY protein in vivo. May bind preferentially to an uncomplexed state of SecY, thus functioning either as a chelating agent for excess SecY in the cell or as a regulatory factor that negatively controls the translocase function. This is Protein Syd from Shewanella amazonensis (strain ATCC BAA-1098 / SB2B).